The chain runs to 586 residues: 3-hydroxy-3-methylglutaryl-coenzyme A reductase 3 (586 aa).

2 helical membrane passes run 36-59 (PSDY…FFSV) and 87-107 (ALIC…IGFV). The linker stretch occupies residues 108–170 (HSFSRASTDS…STTTTSTLSD (63 aa)). 2 catalytic regions span residues 171–586 (DDEQ…KITF) and 172–586 (DEQI…KITF). Catalysis depends on charge relay system residues Glu265, Lys397, and Asp473. The active-site Proton donor is the His571. N-linked (GlcNAc...) asparagine glycosylation occurs at Asn575.

This sequence belongs to the HMG-CoA reductase family.

Its subcellular location is the endoplasmic reticulum membrane. It localises to the mitochondrion membrane. The protein resides in the plastid membrane. It carries out the reaction (R)-mevalonate + 2 NADP(+) + CoA = (3S)-3-hydroxy-3-methylglutaryl-CoA + 2 NADPH + 2 H(+). It functions in the pathway metabolic intermediate biosynthesis; (R)-mevalonate biosynthesis; (R)-mevalonate from acetyl-CoA: step 3/3. In terms of biological role, catalyzes the synthesis of mevalonate. The specific precursor of all isoprenoid compounds present in plants. In Hevea brasiliensis (Para rubber tree), this protein is 3-hydroxy-3-methylglutaryl-coenzyme A reductase 3 (HMGR3).